A 241-amino-acid chain; its full sequence is Carboxy-S-adenosyl-L-methionine synthase (241 aa).

Residues Y38, 63–65, 88–89, 116–117, N131, and R198 contribute to the S-adenosyl-L-methionine site; these read GCS, DN, and DI.

This sequence belongs to the class I-like SAM-binding methyltransferase superfamily. Cx-SAM synthase family. In terms of assembly, homodimer.

It carries out the reaction prephenate + S-adenosyl-L-methionine = carboxy-S-adenosyl-L-methionine + 3-phenylpyruvate + H2O. Functionally, catalyzes the conversion of S-adenosyl-L-methionine (SAM) to carboxy-S-adenosyl-L-methionine (Cx-SAM). This Haemophilus influenzae (strain ATCC 51907 / DSM 11121 / KW20 / Rd) protein is Carboxy-S-adenosyl-L-methionine synthase.